Reading from the N-terminus, the 121-residue chain is Protein YxiB (121 aa).

The protein is Protein YxiB (yxiB) of Bacillus subtilis (strain 168).